The following is an 80-amino-acid chain: Putative ankyrin repeat protein RC0877 (80 aa).

The ANK repeat unit spans residues 6–46; it reads SGGIPLHAVAKNVRCTSKDIKDYEIYKLLVSYGADINARVE.

This chain is Putative ankyrin repeat protein RC0877, found in Rickettsia conorii (strain ATCC VR-613 / Malish 7).